Reading from the N-terminus, the 194-residue chain is MKIGIVTGIPGVGKTTVLSKVKEILEEKKINNKIVNYGDYMLMTAMKLGYVNNRDEMRKLPVEKQKQLQIEAARGIANEAKEGGDGLLFIDTHAVIRTPSGYLPGLPKYVIEEINPRVIFLLEADPKVILDRQKRDTSRSRSDYSDERIISETINFARYAAMASAVLVGATVKIVINVEGDPAVAANEIINSML.

Residue G8–T16 coordinates ATP.

Belongs to the archaeal adenylate kinase family.

It is found in the cytoplasm. The enzyme catalyses AMP + ATP = 2 ADP. In Sulfurisphaera tokodaii (strain DSM 16993 / JCM 10545 / NBRC 100140 / 7) (Sulfolobus tokodaii), this protein is Adenylate kinase (adkA).